We begin with the raw amino-acid sequence, 54 residues long: MLDNALLGLTHEQQQEAVEKIQQLMAEGMSSGEAIAFVAQELRQKQQKLNNTHS.

The protein belongs to the UPF0181 family.

The polypeptide is UPF0181 protein PM0480 (Pasteurella multocida (strain Pm70)).